A 181-amino-acid chain; its full sequence is Adenine phosphoribosyltransferase (181 aa).

The protein belongs to the purine/pyrimidine phosphoribosyltransferase family. As to quaternary structure, homodimer.

It is found in the cytoplasm. It carries out the reaction AMP + diphosphate = 5-phospho-alpha-D-ribose 1-diphosphate + adenine. The protein operates within purine metabolism; AMP biosynthesis via salvage pathway; AMP from adenine: step 1/1. In terms of biological role, catalyzes a salvage reaction resulting in the formation of AMP, that is energically less costly than de novo synthesis. This Chromohalobacter salexigens (strain ATCC BAA-138 / DSM 3043 / CIP 106854 / NCIMB 13768 / 1H11) protein is Adenine phosphoribosyltransferase.